The primary structure comprises 246 residues: tRNA (guanine-N(7)-)-methyltransferase (246 aa).

Residues 1–26 form a disordered region; the sequence is MIENPSPSAANLPEHPSTDASHPRNI. Positions 75, 100, 127, and 150 each coordinate S-adenosyl-L-methionine. Residue aspartate 150 is part of the active site. Lysine 154 contacts substrate. The tract at residues 156–161 is interaction with RNA; sequence KHNKRR. Residues aspartate 186 and 225 to 228 contribute to the substrate site; that span reads TKFE.

Belongs to the class I-like SAM-binding methyltransferase superfamily. TrmB family.

It catalyses the reaction guanosine(46) in tRNA + S-adenosyl-L-methionine = N(7)-methylguanosine(46) in tRNA + S-adenosyl-L-homocysteine. Its pathway is tRNA modification; N(7)-methylguanine-tRNA biosynthesis. Functionally, catalyzes the formation of N(7)-methylguanine at position 46 (m7G46) in tRNA. The protein is tRNA (guanine-N(7)-)-methyltransferase of Polaromonas sp. (strain JS666 / ATCC BAA-500).